We begin with the raw amino-acid sequence, 37 residues long: Photosystem I reaction center subunit VIII (37 aa).

A helical transmembrane segment spans residues 7 to 27; the sequence is LPAIFVPLVGLVFPAIAMVSL.

It belongs to the PsaI family.

The protein resides in the plastid. Its subcellular location is the chloroplast thylakoid membrane. Its function is as follows. May help in the organization of the PsaL subunit. The chain is Photosystem I reaction center subunit VIII from Morus indica (Mulberry).